A 414-amino-acid polypeptide reads, in one-letter code: Serpin A3-6 (414 aa).

The first 25 residues, 1–25, serve as a signal peptide directing secretion; sequence MRTERVSPLLALGILVAGLCSRVHC. 5 N-linked (GlcNAc...) asparagine glycosylation sites follow: Asn-103, Asn-183, Asn-233, Asn-267, and Asn-321.

The protein belongs to the serpin family. In terms of assembly, homodimer.

The protein localises to the cytoplasmic vesicle. Its subcellular location is the secretory vesicle. It localises to the chromaffin granule. The protein resides in the secreted. Its function is as follows. Serine protease inhibitor. The polypeptide is Serpin A3-6 (Bos taurus (Bovine)).